The chain runs to 446 residues: Glutamyl-tRNA reductase (446 aa).

Residues 49–52 (TCNR), Ser-107, 112–114 (EPQ), and Gln-118 contribute to the substrate site. The active-site Nucleophile is the Cys-50. 187–192 (GAGETI) provides a ligand contact to NADP(+). The segment at 417–446 (NANEDTRESVDKEQTGTTQGAARGDQRSTG) is disordered. The segment covering 420–430 (EDTRESVDKEQ) has biased composition (basic and acidic residues).

Belongs to the glutamyl-tRNA reductase family. Homodimer.

It carries out the reaction (S)-4-amino-5-oxopentanoate + tRNA(Glu) + NADP(+) = L-glutamyl-tRNA(Glu) + NADPH + H(+). It functions in the pathway porphyrin-containing compound metabolism; protoporphyrin-IX biosynthesis; 5-aminolevulinate from L-glutamyl-tRNA(Glu): step 1/2. In terms of biological role, catalyzes the NADPH-dependent reduction of glutamyl-tRNA(Glu) to glutamate 1-semialdehyde (GSA). The protein is Glutamyl-tRNA reductase of Alkalilimnicola ehrlichii (strain ATCC BAA-1101 / DSM 17681 / MLHE-1).